The sequence spans 231 residues: Large ribosomal subunit protein uL1 (231 aa).

It belongs to the universal ribosomal protein uL1 family. In terms of assembly, part of the 50S ribosomal subunit.

Its function is as follows. Binds directly to 23S rRNA. The L1 stalk is quite mobile in the ribosome, and is involved in E site tRNA release. Functionally, protein L1 is also a translational repressor protein, it controls the translation of the L11 operon by binding to its mRNA. This chain is Large ribosomal subunit protein uL1, found in Acinetobacter baumannii (strain AB0057).